An 841-amino-acid chain; its full sequence is Probable alpha-glucuronidase A (841 aa).

A signal peptide spans 1-20; the sequence is MRGLNLFQLILALLLSMVAA. Residues Asn51, Asn76, Asn85, Asn149, Asn222, Asn279, Asn310, Asn343, Asn450, Asn465, Asn527, Asn576, Asn682, Asn723, and Asn732 are each glycosylated (N-linked (GlcNAc...) asparagine).

It belongs to the glycosyl hydrolase 67 family.

It localises to the secreted. The catalysed reaction is an alpha-D-glucuronoside + H2O = D-glucuronate + an alcohol. Functionally, alpha-glucuronidase involved in the hydrolysis of xylan, a major structural heterogeneous polysaccharide found in plant biomass representing the second most abundant polysaccharide in the biosphere, after cellulose. Releases 4-O-methylglucuronic acid from xylan. The protein is Probable alpha-glucuronidase A (aguA) of Aspergillus niger (strain ATCC MYA-4892 / CBS 513.88 / FGSC A1513).